A 37-amino-acid chain; its full sequence is Ferredoxin--NADP reductase, chloroplastic (37 aa).

NADP(+) contacts are provided by residues serine 3 and 24-25 (SR).

It belongs to the ferredoxin--NADP reductase type 1 family. FAD is required as a cofactor.

It localises to the plastid. The protein resides in the chloroplast stroma. It is found in the chloroplast thylakoid membrane. It catalyses the reaction 2 reduced [2Fe-2S]-[ferredoxin] + NADP(+) + H(+) = 2 oxidized [2Fe-2S]-[ferredoxin] + NADPH. It participates in energy metabolism; photosynthesis. In terms of biological role, may play a key role in regulating the relative amounts of cyclic and non-cyclic electron flow to meet the demands of the plant for ATP and reducing power. The sequence is that of Ferredoxin--NADP reductase, chloroplastic from Imperata cylindrica (Cogon grass).